Consider the following 215-residue polypeptide: Adenylate kinase (215 aa).

10–15 (GAGKGT) provides a ligand contact to ATP. Residues 30–59 (STGDILRANVREGTELGLAAKAYMDKGELV) form an NMP region. AMP is bound by residues T31, R36, 57-59 (ELV), 85-88 (GYPR), and Q92. The interval 126-162 (GRLMCKCGASYHIISNPPKKDNVCDICGGEVFQRADD) is LID. R127 lines the ATP pocket. The Zn(2+) site is built by C130 and C132. 135–136 (SY) serves as a coordination point for ATP. Residues C149 and C152 each contribute to the Zn(2+) site. AMP-binding residues include R159 and R170. An ATP-binding site is contributed by K198.

The protein belongs to the adenylate kinase family. In terms of assembly, monomer.

The protein resides in the cytoplasm. The enzyme catalyses AMP + ATP = 2 ADP. The protein operates within purine metabolism; AMP biosynthesis via salvage pathway; AMP from ADP: step 1/1. Catalyzes the reversible transfer of the terminal phosphate group between ATP and AMP. Plays an important role in cellular energy homeostasis and in adenine nucleotide metabolism. This Methanosarcina acetivorans (strain ATCC 35395 / DSM 2834 / JCM 12185 / C2A) protein is Adenylate kinase.